The sequence spans 419 residues: Methylthioribose kinase (419 aa).

Residues Asn-49 and Lys-64 each contribute to the ATP site. Asp-239 lines the substrate pocket. 256-258 (DPE) serves as a coordination point for ATP. Residue Arg-365 coordinates substrate.

It belongs to the methylthioribose kinase family. As to quaternary structure, homodimer.

The enzyme catalyses 5-(methylsulfanyl)-D-ribose + ATP = 5-(methylsulfanyl)-alpha-D-ribose 1-phosphate + ADP + H(+). The catalysed reaction is 5-deoxy-D-ribose + ATP = 5-deoxy-alpha-D-ribose 1-phosphate + ADP + H(+). It functions in the pathway amino-acid biosynthesis; L-methionine biosynthesis via salvage pathway; S-methyl-5-thio-alpha-D-ribose 1-phosphate from S-methyl-5'-thioadenosine (hydrolase route): step 2/2. In terms of biological role, catalyzes the phosphorylation of methylthioribose into methylthioribose-1-phosphate. Also catalyzes the phosphorylation of 5-deoxyribose to 5-deoxyribose-1-phosphate. Part of a bifunctional DHAP-shunt salvage pathway for SAM by-products. This chain is Methylthioribose kinase, found in Escherichia coli O45:K1 (strain S88 / ExPEC).